A 115-amino-acid chain; its full sequence is Flagellar transcriptional regulator FlhD (115 aa).

It belongs to the FlhD family. In terms of assembly, homodimer; disulfide-linked. Forms a heterohexamer composed of two FlhC and four FlhD subunits. Each FlhC binds a FlhD dimer, forming a heterotrimer, and a hexamer assembles by dimerization of two heterotrimers.

It localises to the cytoplasm. In terms of biological role, functions in complex with FlhC as a master transcriptional regulator that regulates transcription of several flagellar and non-flagellar operons by binding to their promoter region. Activates expression of class 2 flagellar genes, including fliA, which is a flagellum-specific sigma factor that turns on the class 3 genes. Also regulates genes whose products function in a variety of physiological pathways. This is Flagellar transcriptional regulator FlhD from Edwardsiella ictaluri (strain 93-146).